The following is a 74-amino-acid chain: uncharacterized protein (74 aa).

A helical membrane pass occupies residues 52–72 (ITFGFTVLGLGIGMIFGDAGL).

The protein resides in the membrane. This is an uncharacterized protein from Methanocaldococcus jannaschii (strain ATCC 43067 / DSM 2661 / JAL-1 / JCM 10045 / NBRC 100440) (Methanococcus jannaschii).